The chain runs to 695 residues: Protein EARLY FLOWERING 3 (695 aa).

Positions 1 to 11 (MKRGKDEEKIL) are enriched in basic and acidic residues. 5 disordered regions span residues 1-33 (MKRG…APPR), 48-75 (RFGD…SQPC), 136-159 (RSQS…VAPS), 216-283 (EKSA…REYS), and 541-653 (CSSQ…QTTR). Positions 54–74 (TMNSRSNNTSTLVHPGPSSQP) are enriched in polar residues. Composition is skewed to basic and acidic residues over residues 216–226 (EKSASSHDRVN), 234–253 (QESR…KDTD), and 260–283 (LATE…REYS). Positions 261–484 (ATENHSQEGH…VMSPSEGLIY (224 aa)) are interaction with ELF3. 2 stretches are compositionally biased toward polar residues: residues 551–567 (PNEQ…LQNT) and 579–588 (APQQQQQPTK). 2 stretches are compositionally biased toward low complexity: residues 598–616 (QGST…GSKS) and 636–653 (TMTT…QTTR).

Interacts specifically with both Pr and Pfr forms of phytochrome B. Interacts with ELF4. May form a homodimer.

It localises to the nucleus. Functionally, may be a transcription factor part of a circadian clock input pathway. Acts within a 'zeitnehmer' feedback loop and is involved in its own circadian regulation. Has no role in regulating circadian clock function in the dark. Part of a corepressor complex consisting of ELF4, ELF3, and LUX involved in the transcriptional regulation of APRR9. The activity of the protein may be decreased in long day conditions due to its interaction with phytochrome B (phyB). Can regulate the initiation of flowering independently of phyB. Also involved in responses to nematode parasitism, like the formation of the nematode feeding structure. The protein is Protein EARLY FLOWERING 3 (ELF3) of Arabidopsis thaliana (Mouse-ear cress).